We begin with the raw amino-acid sequence, 212 residues long: NAD(P)H-hydrate epimerase (212 aa).

One can recognise a YjeF N-terminal domain in the interval 11 to 212 (MRHYDSYTIN…ANDMGTYAVD (202 aa)). (6S)-NADPHX is bound at residue 60–64 (NNGGD). The K(+) site is built by Asn-61 and Asp-123. (6S)-NADPHX contacts are provided by residues 127-133 (GIGIDRA), Tyr-138, and Asp-156. Ser-159 provides a ligand contact to K(+).

It belongs to the NnrE/AIBP family. K(+) is required as a cofactor.

It catalyses the reaction (6R)-NADHX = (6S)-NADHX. It carries out the reaction (6R)-NADPHX = (6S)-NADPHX. Its function is as follows. Catalyzes the epimerization of the S- and R-forms of NAD(P)HX, a damaged form of NAD(P)H that is a result of enzymatic or heat-dependent hydration. This is a prerequisite for the S-specific NAD(P)H-hydrate dehydratase to allow the repair of both epimers of NAD(P)HX. This Limosilactobacillus reuteri (strain ATCC 55730 / SD2112) (Lactobacillus reuteri) protein is NAD(P)H-hydrate epimerase.